The following is a 221-amino-acid chain: Epididymal secretory glutathione peroxidase (221 aa).

An N-terminal signal peptide occupies residues 1 to 21 (MTAWLGASYVLPILLVSFVQT). Residue C73 is part of the active site.

This sequence belongs to the glutathione peroxidase family. In terms of tissue distribution, epididymis.

Its subcellular location is the secreted. The catalysed reaction is 2 glutathione + H2O2 = glutathione disulfide + 2 H2O. Functionally, protects cells and enzymes from oxidative damage, by catalyzing the reduction of hydrogen peroxide, lipid peroxides and organic hydroperoxide, by glutathione. May constitute a glutathione peroxidase-like protective system against peroxide damage in sperm membrane lipids. The chain is Epididymal secretory glutathione peroxidase (GPX5) from Canis lupus familiaris (Dog).